The primary structure comprises 208 residues: 3-demethoxyubiquinol 3-hydroxylase (208 aa).

Positions 57, 87, 90, 139, 171, and 174 each coordinate Fe cation.

Belongs to the COQ7 family. It depends on Fe cation as a cofactor.

The protein localises to the cell membrane. It catalyses the reaction a 5-methoxy-2-methyl-3-(all-trans-polyprenyl)benzene-1,4-diol + AH2 + O2 = a 3-demethylubiquinol + A + H2O. Its pathway is cofactor biosynthesis; ubiquinone biosynthesis. In terms of biological role, catalyzes the hydroxylation of 2-nonaprenyl-3-methyl-6-methoxy-1,4-benzoquinol during ubiquinone biosynthesis. The polypeptide is 3-demethoxyubiquinol 3-hydroxylase (Burkholderia ambifaria (strain MC40-6)).